The chain runs to 547 residues: Delta-guaiene synthase 2 (547 aa).

Mg(2+)-binding residues include aspartate 299, aspartate 303, and aspartate 444. A DDXXD motif motif is present at residues 299-303; the sequence is DDTYD.

It belongs to the terpene synthase family. The cofactor is Mg(2+).

The enzyme catalyses (2E,6E)-farnesyl diphosphate = delta-guaiene + diphosphate. It carries out the reaction (2E,6E)-farnesyl diphosphate = alpha-guaiene + diphosphate. It participates in secondary metabolite biosynthesis; terpenoid biosynthesis. Sesquiterpene synthase involved in the biosynthesis of delta-guaiene (53.7%) and alpha-guaiene (44.6%), two structures composed of five- and seven-membered rings. Also produces 1.7% of alpha-humulene. This is Delta-guaiene synthase 2 (C3) from Aquilaria crassna (Eagle wood).